A 195-amino-acid polypeptide reads, in one-letter code: Penicillin-binding protein activator LpoB (195 aa).

The N-terminal stretch at 1–16 (MKKRALIVLAALVLAS) is a signal peptide. Residue Cys-17 is the site of N-palmitoyl cysteine attachment. Cys-17 is lipidated: S-diacylglycerol cysteine. Residues 19–51 (SRKPASPPAPIEPVPPPVTVSVQPPPPATSEPV) are disordered. The span at 23–51 (ASPPAPIEPVPPPVTVSVQPPPPATSEPV) shows a compositional bias: pro residues.

Belongs to the LpoB family. Interacts with PBP1b.

Its subcellular location is the cell outer membrane. In terms of biological role, regulator of peptidoglycan synthesis that is essential for the function of penicillin-binding protein 1B (PBP1b). The chain is Penicillin-binding protein activator LpoB from Sodalis glossinidius (strain morsitans).